We begin with the raw amino-acid sequence, 257 residues long: NAD kinase (257 aa).

The Proton acceptor role is filled by Asp46. Residues Asp46 to Gly47, His51, Asn116 to Glu117, Asp146, Ala154, Thr157 to Ser162, and Gln218 each bind NAD(+).

This sequence belongs to the NAD kinase family. It depends on a divalent metal cation as a cofactor.

It is found in the cytoplasm. It catalyses the reaction NAD(+) + ATP = ADP + NADP(+) + H(+). In terms of biological role, involved in the regulation of the intracellular balance of NAD and NADP, and is a key enzyme in the biosynthesis of NADP. Catalyzes specifically the phosphorylation on 2'-hydroxyl of the adenosine moiety of NAD to yield NADP. In Rhizobium meliloti (strain 1021) (Ensifer meliloti), this protein is NAD kinase.